We begin with the raw amino-acid sequence, 397 residues long: Argininosuccinate synthase (397 aa).

7–15 (AFSGGLDTT) contacts ATP. Tyrosine 84 is a binding site for L-citrulline. Glycine 114 contributes to the ATP binding site. L-aspartate is bound by residues threonine 116, asparagine 120, and aspartate 121. L-citrulline is bound at residue asparagine 120. 5 residues coordinate L-citrulline: arginine 124, serine 170, serine 179, glutamate 254, and tyrosine 266.

The protein belongs to the argininosuccinate synthase family. Type 1 subfamily. In terms of assembly, homotetramer.

The protein localises to the cytoplasm. The enzyme catalyses L-citrulline + L-aspartate + ATP = 2-(N(omega)-L-arginino)succinate + AMP + diphosphate + H(+). Its pathway is amino-acid biosynthesis; L-arginine biosynthesis; L-arginine from L-ornithine and carbamoyl phosphate: step 2/3. The sequence is that of Argininosuccinate synthase from Haloquadratum walsbyi (strain DSM 16790 / HBSQ001).